Consider the following 25-residue polypeptide: Cytochrome c oxidase polypeptide VIIc (25 aa).

The interval 1–25 (SHYSEGPGQNLPFSVQNKXRLLGMM) is disordered.

The protein belongs to the cytochrome c oxidase VIIc family. In terms of assembly, component of the cytochrome c oxidase (complex IV, CIV), a multisubunit enzyme composed of 14 subunits. The complex is composed of a catalytic core of 3 subunits MT-CO1, MT-CO2 and MT-CO3, encoded in the mitochondrial DNA, and 11 supernumerary subunits COX4I, COX5A, COX5B, COX6A, COX6B, COX6C, COX7A, COX7B, COX7C, COX8 and NDUFA4, which are encoded in the nuclear genome. The complex exists as a monomer or a dimer and forms supercomplexes (SCs) in the inner mitochondrial membrane with NADH-ubiquinone oxidoreductase (complex I, CI) and ubiquinol-cytochrome c oxidoreductase (cytochrome b-c1 complex, complex III, CIII), resulting in different assemblies (supercomplex SCI(1)III(2)IV(1) and megacomplex MCI(2)III(2)IV(2)). Interacts with RAB5IF.

It is found in the mitochondrion inner membrane. It functions in the pathway energy metabolism; oxidative phosphorylation. Component of the cytochrome c oxidase, the last enzyme in the mitochondrial electron transport chain which drives oxidative phosphorylation. The respiratory chain contains 3 multisubunit complexes succinate dehydrogenase (complex II, CII), ubiquinol-cytochrome c oxidoreductase (cytochrome b-c1 complex, complex III, CIII) and cytochrome c oxidase (complex IV, CIV), that cooperate to transfer electrons derived from NADH and succinate to molecular oxygen, creating an electrochemical gradient over the inner membrane that drives transmembrane transport and the ATP synthase. Cytochrome c oxidase is the component of the respiratory chain that catalyzes the reduction of oxygen to water. Electrons originating from reduced cytochrome c in the intermembrane space (IMS) are transferred via the dinuclear copper A center (CU(A)) of subunit 2 and heme A of subunit 1 to the active site in subunit 1, a binuclear center (BNC) formed by heme A3 and copper B (CU(B)). The BNC reduces molecular oxygen to 2 water molecules using 4 electrons from cytochrome c in the IMS and 4 protons from the mitochondrial matrix. In Oncorhynchus mykiss (Rainbow trout), this protein is Cytochrome c oxidase polypeptide VIIc.